Reading from the N-terminus, the 367-residue chain is Probable butyrate kinase (367 aa).

Belongs to the acetokinase family.

It localises to the cytoplasm. It catalyses the reaction butanoate + ATP = butanoyl phosphate + ADP. This is Probable butyrate kinase from Bacillus cereus (strain Q1).